We begin with the raw amino-acid sequence, 377 residues long: tRNA N6-adenosine threonylcarbamoyltransferase (377 aa).

H129 and H133 together coordinate Fe cation. Substrate-binding positions include 151 to 155 (LVSGG), D184, G197, and N298. Position 326 (D326) interacts with Fe cation. The tract at residues 358–377 (DGAAAKSDPAIGSGRKGPKA) is disordered.

The protein belongs to the KAE1 / TsaD family. Requires Fe(2+) as cofactor.

It is found in the cytoplasm. The catalysed reaction is L-threonylcarbamoyladenylate + adenosine(37) in tRNA = N(6)-L-threonylcarbamoyladenosine(37) in tRNA + AMP + H(+). In terms of biological role, required for the formation of a threonylcarbamoyl group on adenosine at position 37 (t(6)A37) in tRNAs that read codons beginning with adenine. Is involved in the transfer of the threonylcarbamoyl moiety of threonylcarbamoyl-AMP (TC-AMP) to the N6 group of A37, together with TsaE and TsaB. TsaD likely plays a direct catalytic role in this reaction. This is tRNA N6-adenosine threonylcarbamoyltransferase from Maricaulis maris (strain MCS10) (Caulobacter maris).